We begin with the raw amino-acid sequence, 158 residues long: Cyclic pyranopterin monophosphate synthase (158 aa).

Residues 75 to 77 (LCH) and 113 to 114 (ME) contribute to the substrate site. Aspartate 128 is an active-site residue.

This sequence belongs to the MoaC family. As to quaternary structure, homohexamer; trimer of dimers.

The enzyme catalyses (8S)-3',8-cyclo-7,8-dihydroguanosine 5'-triphosphate = cyclic pyranopterin phosphate + diphosphate. It participates in cofactor biosynthesis; molybdopterin biosynthesis. Its function is as follows. Catalyzes the conversion of (8S)-3',8-cyclo-7,8-dihydroguanosine 5'-triphosphate to cyclic pyranopterin monophosphate (cPMP). The polypeptide is Cyclic pyranopterin monophosphate synthase (Roseiflexus castenholzii (strain DSM 13941 / HLO8)).